Consider the following 347-residue polypeptide: NADH-ubiquinone oxidoreductase chain 2 (347 aa).

The next 10 membrane-spanning stretches (helical) occupy residues 3 to 23 (PMIF…VMMS), 25 to 45 (HWFM…PVLM), 59 to 79 (YFLT…INLM), 96 to 116 (MLIT…FWVP), 122 to 142 (IPLS…LSLL), 149 to 169 (INME…GWGG), 201 to 221 (SFLN…LLIF), 239 to 259 (IIAT…PLTG), 274 to 294 (NSTI…FFYI), and 326 to 346 (ILPL…FLML).

The protein belongs to the complex I subunit 2 family. As to quaternary structure, core subunit of respiratory chain NADH dehydrogenase (Complex I) which is composed of 45 different subunits. Interacts with TMEM242.

It is found in the mitochondrion inner membrane. It carries out the reaction a ubiquinone + NADH + 5 H(+)(in) = a ubiquinol + NAD(+) + 4 H(+)(out). Core subunit of the mitochondrial membrane respiratory chain NADH dehydrogenase (Complex I) that is believed to belong to the minimal assembly required for catalysis. Complex I functions in the transfer of electrons from NADH to the respiratory chain. The immediate electron acceptor for the enzyme is believed to be ubiquinone. This chain is NADH-ubiquinone oxidoreductase chain 2, found in Crocidura hildegardeae (Hildegarde's shrew).